Reading from the N-terminus, the 646-residue chain is Serine/threonine-protein kinase sck2 (646 aa).

2 disordered regions span residues 17–85 (VSTN…LPEV) and 143–176 (GRDIGTSSRDSANVSRSSSMMSSHPIPTPAIQRT). Residues 68–80 (SDQSTVGNRNSND) are compositionally biased toward polar residues. Low complexity predominate over residues 149–165 (SSRDSANVSRSSSMMSS). Residues 266-527 (FVPLKLIGKG…VEEVMKHPFF (262 aa)) enclose the Protein kinase domain. ATP is bound by residues 272–280 (IGKGTFGQV) and K295. The active-site Proton acceptor is the D392. In terms of domain architecture, AGC-kinase C-terminal spans 528–605 (DGIDWKKLAA…IDASAMDEAF (78 aa)). Residues 609–646 (NSNDSASSISSQDDYSKDNSDMDLNRANDEVFMGQIDP) are disordered. The span at 610–621 (SNDSASSISSQD) shows a compositional bias: low complexity. Positions 622–637 (DYSKDNSDMDLNRAND) are enriched in basic and acidic residues.

The protein belongs to the protein kinase superfamily. AGC Ser/Thr protein kinase family. PKC subfamily.

It catalyses the reaction L-seryl-[protein] + ATP = O-phospho-L-seryl-[protein] + ADP + H(+). It carries out the reaction L-threonyl-[protein] + ATP = O-phospho-L-threonyl-[protein] + ADP + H(+). Its function is as follows. Protein kinase that is part of growth control pathway which is at least partially redundant with the cAMP pathway. The protein is Serine/threonine-protein kinase sck2 (sck2) of Schizosaccharomyces pombe (strain 972 / ATCC 24843) (Fission yeast).